A 309-amino-acid polypeptide reads, in one-letter code: Porphobilinogen deaminase (309 aa).

At C241 the chain carries S-(dipyrrolylmethanemethyl)cysteine.

The protein belongs to the HMBS family. In terms of assembly, monomer. The cofactor is dipyrromethane.

The catalysed reaction is 4 porphobilinogen + H2O = hydroxymethylbilane + 4 NH4(+). Its pathway is porphyrin-containing compound metabolism; protoporphyrin-IX biosynthesis; coproporphyrinogen-III from 5-aminolevulinate: step 2/4. In terms of biological role, tetrapolymerization of the monopyrrole PBG into the hydroxymethylbilane pre-uroporphyrinogen in several discrete steps. The chain is Porphobilinogen deaminase from Geobacillus kaustophilus (strain HTA426).